Consider the following 152-residue polypeptide: Transcriptional regulator MraZ (152 aa).

2 consecutive SpoVT-AbrB domains span residues 5–52 (ATLV…PLPE) and 81–124 (ASEC…DETT).

Belongs to the MraZ family. As to quaternary structure, forms oligomers.

It localises to the cytoplasm. The protein localises to the nucleoid. Negatively regulates its own expression and that of the subsequent genes in the proximal part of the division and cell wall (dcw) gene cluster. Acts by binding directly to DNA. May also regulate the expression of genes outside the dcw cluster. The sequence is that of Transcriptional regulator MraZ from Shigella sonnei (strain Ss046).